The sequence spans 118 residues: Galanin peptides (118 aa).

Positions 1–19 (MHRCVGGVCVSLIVCAFLT) are cleaved as a signal peptide. The propeptide occupies 20–30 (ETLGMVIAAKE). Ala-61 is subject to Alanine amide.

This sequence belongs to the galanin family. As to expression, strongly expressed in brain and stomach, moderately in the eye, and very weakly in heart, kidney and gills. Not detected in liver.

It localises to the secreted. Its function is as follows. Endocrine hormone of the central and peripheral nervous systems that binds and activates the G protein-coupled receptors GALR1 (galr1a and galr1b) and GALR2 (galr2a and galr2b). This small neuropeptide may regulate diverse physiologic functions including contraction of smooth muscle of the gastrointestinal and genitourinary tract, growth hormone and insulin release and adrenal secretion. The polypeptide is Galanin peptides (Danio rerio (Zebrafish)).